We begin with the raw amino-acid sequence, 445 residues long: Xylose isomerase (445 aa).

Active-site residues include H107 and D110. Mg(2+) contacts are provided by E238, E274, H277, D302, D313, D315, and D345.

Belongs to the xylose isomerase family. As to quaternary structure, homotetramer. It depends on Mg(2+) as a cofactor.

The protein localises to the cytoplasm. The enzyme catalyses alpha-D-xylose = alpha-D-xylulofuranose. This Priestia megaterium (strain DSM 319 / IMG 1521) (Bacillus megaterium) protein is Xylose isomerase (xylA).